Here is a 644-residue protein sequence, read N- to C-terminus: DNA mismatch repair protein MutL (644 aa).

Disordered regions lie at residues 353 to 399 (SESG…SQLT) and 420 to 440 (GSMA…RARA). The segment covering 370–381 (SPESKTHSTWNE) has biased composition (polar residues). Positions 383–399 (SRVDTSRVEISRDSQLT) are enriched in basic and acidic residues.

The protein belongs to the DNA mismatch repair MutL/HexB family.

Its function is as follows. This protein is involved in the repair of mismatches in DNA. It is required for dam-dependent methyl-directed DNA mismatch repair. May act as a 'molecular matchmaker', a protein that promotes the formation of a stable complex between two or more DNA-binding proteins in an ATP-dependent manner without itself being part of a final effector complex. The polypeptide is DNA mismatch repair protein MutL (Shewanella sp. (strain MR-4)).